Reading from the N-terminus, the 93-residue chain is Small ribosomal subunit protein uS19 (93 aa).

This sequence belongs to the universal ribosomal protein uS19 family.

Protein S19 forms a complex with S13 that binds strongly to the 16S ribosomal RNA. This is Small ribosomal subunit protein uS19 from Nitratidesulfovibrio vulgaris (strain DSM 19637 / Miyazaki F) (Desulfovibrio vulgaris).